Reading from the N-terminus, the 380-residue chain is Chaperone protein DnaJ (380 aa).

The J domain maps to 5 to 69; sequence DFYEVLGVGR…QKKAAYDQYG (65 aa). The CR-type zinc-finger motif lies at 135–213; the sequence is GCSKEIRVPT…CHGQGRVEKT (79 aa). Positions 148, 151, 165, 168, 187, 190, 201, and 204 each coordinate Zn(2+). CXXCXGXG motif repeat units follow at residues 148-155, 165-172, 187-194, and 201-208; these read CDSCDGSG, CGTCHGQG, CPHCHGRG, and CNSCHGQG.

The protein belongs to the DnaJ family. Homodimer. Zn(2+) is required as a cofactor.

It is found in the cytoplasm. Functionally, participates actively in the response to hyperosmotic and heat shock by preventing the aggregation of stress-denatured proteins and by disaggregating proteins, also in an autonomous, DnaK-independent fashion. Unfolded proteins bind initially to DnaJ; upon interaction with the DnaJ-bound protein, DnaK hydrolyzes its bound ATP, resulting in the formation of a stable complex. GrpE releases ADP from DnaK; ATP binding to DnaK triggers the release of the substrate protein, thus completing the reaction cycle. Several rounds of ATP-dependent interactions between DnaJ, DnaK and GrpE are required for fully efficient folding. Also involved, together with DnaK and GrpE, in the DNA replication of plasmids through activation of initiation proteins. This Photobacterium profundum (strain SS9) protein is Chaperone protein DnaJ.